The primary structure comprises 547 residues: Chaperonin GroEL (547 aa).

ATP contacts are provided by residues 30–33 (TLGP), Lys-51, 87–91 (DGTTT), Gly-415, and Asp-495. The disordered stretch occupies residues 526-547 (KKDTPVPPMPGGGMGGMGGMDF). The span at 536–547 (GGGMGGMGGMDF) shows a compositional bias: gly residues.

It belongs to the chaperonin (HSP60) family. In terms of assembly, forms a cylinder of 14 subunits composed of two heptameric rings stacked back-to-back. Interacts with the co-chaperonin GroES.

Its subcellular location is the cytoplasm. It catalyses the reaction ATP + H2O + a folded polypeptide = ADP + phosphate + an unfolded polypeptide.. Its function is as follows. Together with its co-chaperonin GroES, plays an essential role in assisting protein folding. The GroEL-GroES system forms a nano-cage that allows encapsulation of the non-native substrate proteins and provides a physical environment optimized to promote and accelerate protein folding. This Bartonella henselae (strain ATCC 49882 / DSM 28221 / CCUG 30454 / Houston 1) (Rochalimaea henselae) protein is Chaperonin GroEL.